The chain runs to 47 residues: Large ribosomal subunit protein bL34 (47 aa).

Belongs to the bacterial ribosomal protein bL34 family.

The chain is Large ribosomal subunit protein bL34 from Nocardia farcinica (strain IFM 10152).